Consider the following 430-residue polypeptide: Histidinol dehydrogenase (430 aa).

Substrate is bound by residues Ser-237, Gln-259, and His-262. Residues Gln-259 and His-262 each coordinate Zn(2+). Active-site proton acceptor residues include Glu-327 and His-328. Positions 328, 361, 415, and 420 each coordinate substrate. Asp-361 provides a ligand contact to Zn(2+). Residue His-420 participates in Zn(2+) binding.

It belongs to the histidinol dehydrogenase family. Zn(2+) is required as a cofactor.

It carries out the reaction L-histidinol + 2 NAD(+) + H2O = L-histidine + 2 NADH + 3 H(+). It participates in amino-acid biosynthesis; L-histidine biosynthesis; L-histidine from 5-phospho-alpha-D-ribose 1-diphosphate: step 9/9. Catalyzes the sequential NAD-dependent oxidations of L-histidinol to L-histidinaldehyde and then to L-histidine. This Mesorhizobium japonicum (strain LMG 29417 / CECT 9101 / MAFF 303099) (Mesorhizobium loti (strain MAFF 303099)) protein is Histidinol dehydrogenase.